Here is a 351-residue protein sequence, read N- to C-terminus: Peptide chain release factor 1 (351 aa).

At glutamine 229 the chain carries N5-methylglutamine.

The protein belongs to the prokaryotic/mitochondrial release factor family. In terms of processing, methylated by PrmC. Methylation increases the termination efficiency of RF1.

It localises to the cytoplasm. Its function is as follows. Peptide chain release factor 1 directs the termination of translation in response to the peptide chain termination codons UAG and UAA. The protein is Peptide chain release factor 1 of Cereibacter sphaeroides (strain ATCC 17025 / ATH 2.4.3) (Rhodobacter sphaeroides).